The following is a 413-amino-acid chain: Cyclic AMP-dependent transcription factor ATF-7 (413 aa).

The interval M1–M285 is transactivation domain. A C2H2-type zinc finger spans residues F7–H31. Phosphothreonine; by MAPK11 is present on T51. Residues T53 and T101 each carry the phosphothreonine modification. Disordered regions lie at residues A81–P140 and H299–R337. K107 is covalently cross-linked (Glycyl lysine isopeptide (Lys-Gly) (interchain with G-Cter in SUMO1)). Composition is skewed to low complexity over residues V114 to P126 and Q307 to G320. The span at T326–R337 shows a compositional bias: basic and acidic residues. The bZIP domain maps to D332–H395. The segment at R334–K354 is basic motif. The segment at L360–L388 is leucine-zipper.

Belongs to the bZIP family. In terms of assembly, homodimer; binds DNA as homodimer. Heterodimer; heterodimerizes with other members of ATF family and with JUN family members. Interacts with JNK2; the interaction does not phosphorylate ATF7 but acts as a docking site for other ATF-associated partners such as JUN family members. Interacts (via its transactivation domain) with TAF12 the interaction potentiates the transactivation activity and is inhibited by ATF7 sumoylation. Interacts with TAF4; the interaction inhibits the TAF12-dependent transactivation. Interacts with MAPK9; the interaction does not phosphorylate ATF7 but acts as a docking site for ATF7-associated partners such as JUN. Interacts with Ku complex components XRCC6 and XRCC7. Interacts with TERT. In terms of processing, on EGF stimulation, phosphorylated first on Thr-53 allowing subsequent phosphorylation on Thr-51. This latter phosphorylation prevents sumoylation, increases binding to TAF12 and enhances transcriptional activity. Social isolation stress as well as TNF-alpha also induce the phosphorylation of ATF7. Phosphorylated in proliferating colonic and small intestinal epithelial cells. Sumoylation delays nuclear localization and inhibits transactivation activity through preventing binding to TAF12. RANBP2 appears to be the specific E3 ligase.

Its subcellular location is the nucleus. The protein localises to the nucleoplasm. The protein resides in the chromosome. It localises to the telomere. Functionally, stress-responsive chromatin regulator that plays a role in various biological processes including innate immunological memory, adipocyte differentiation or telomerase regulation. In absence of stress, contributes to the formation of heterochromatin and heterochromatin-like structure by recruiting histone H3K9 tri- and di-methyltransferases thus silencing the transcription of target genes such as Htr5b, STAT1 in adipocytes, or genes involved in innate immunity in macrophages and adipocytes. Phosphorylation of ATF7 disrupts interactions with histone methyltransferase and enhances the association with coactivators containing histone acetyltransferase and/or histone demethylase, leading to disruption of the heterochromatin-like structure and subsequently transcriptional activation. In response to TNF-alpha, which is induced by various stresses, phosphorylated ATF7 and telomerase are released from telomeres leading to telomere shortening. Also plays a role in maintaining epithelial regenerative capacity and protecting against cell death during intestinal epithelial damage and repair. The protein is Cyclic AMP-dependent transcription factor ATF-7 (Atf7) of Mus musculus (Mouse).